A 351-amino-acid polypeptide reads, in one-letter code: Trans-enoyl reductase grgB (351 aa).

Positions 10 to 346 (GAESGGYRLA…GKVHAKKLVV (337 aa)) constitute an Enoyl reductase (ER) domain. Residues 161–164 (ATAT), 184–187 (SPAN), Y202, 249–250 (LE), and 339–340 (VH) each bind NADP(+).

It belongs to the zinc-containing alcohol dehydrogenase family.

It participates in secondary metabolite biosynthesis. Its function is as follows. Trans-enoyl reductase; part of the gene cluster that mediates the biosynthesis of gregatin A, a fungal polyketide featuring an alkylated furanone core. The PKS grgA synthesizes C11 and C4 polyketide chains in the presence and absence of the trans-enoyl reductase grgB, respectively. The polyketide transferase grgF is then responsible for the fusion of the two carbon chains to produce the furanone skeleton of gregatin A. Next, the cytochrome P450 monooxygenase grgG accepts performs the oxidative cyclization to furnish the gregatin scaffold and leads to the formation of desmethylgregatin A. Finally, the O-methyltransferase grgD methylates the carboxyl group of desmethylgregatin A to provide gregatin A. The sequence is that of Trans-enoyl reductase grgB from Penicillium sp.